The sequence spans 222 residues: Capsular polysaccharide type 8 biosynthesis protein cap8A (222 aa).

A run of 2 helical transmembrane segments spans residues 20 to 40 (ILII…FFVL) and 172 to 192 (VVNL…YIFF).

The protein belongs to the CpsC/CapA family.

The protein localises to the cell membrane. Its function is as follows. Required for the biosynthesis of type 8 capsular polysaccharide (Cap8/CP8). Might act as the chain-length regulator. In Staphylococcus aureus, this protein is Capsular polysaccharide type 8 biosynthesis protein cap8A (cap8A).